We begin with the raw amino-acid sequence, 561 residues long: Amidophosphoribosyltransferase 2, chloroplastic (561 aa).

A compositionally biased stretch (low complexity) spans 1–27; that stretch reads MAATSSISSSLSLNAKPNKLSNNNNNN. The disordered stretch occupies residues 1–36; it reads MAATSSISSSLSLNAKPNKLSNNNNNNKPHRFLRNP. A chloroplast-targeting transit peptide spans 1–53; sequence MAATSSISSSLSLNAKPNKLSNNNNNNKPHRFLRNPFLNPSSSSFSPLPASIS. The Nucleophile role is filled by C87. Positions 87–307 constitute a Glutamine amidotransferase type-2 domain; the sequence is CGVVGIYGDS…PGEVLVVDKD (221 aa). Residues C323, C469, C520, and C523 each contribute to the [4Fe-4S] cluster site.

This sequence in the C-terminal section; belongs to the purine/pyrimidine phosphoribosyltransferase family. The cofactor is [4Fe-4S] cluster. Requires Mg(2+) as cofactor. In terms of tissue distribution, mostly expressed in leaves, and, to a lower extent, in cotyledons.

The protein resides in the plastid. Its subcellular location is the chloroplast stroma. The enzyme catalyses 5-phospho-beta-D-ribosylamine + L-glutamate + diphosphate = 5-phospho-alpha-D-ribose 1-diphosphate + L-glutamine + H2O. It functions in the pathway purine metabolism; IMP biosynthesis via de novo pathway; N(1)-(5-phospho-D-ribosyl)glycinamide from 5-phospho-alpha-D-ribose 1-diphosphate: step 1/2. Its activity is regulated as follows. Inhibited by the phenyltriazole acetic acid compound [5-(4-chlorophenyl)-1-isopropyl-1H-[1,2,4]triazol-3-yl]-acetic acid (DAS734), a bleaching herbicide. Catalyzes the first committed step of 'de novo purine biosynthesis from glutamine. Required for chloroplast biogenesis and cell division. Confers sensitivity to the phenyltriazole acetic acid compound [5-(4-chlorophenyl)-1-isopropyl-1H-[1,2,4]triazol-3-yl]-acetic acid (DAS734), a bleaching herbicide. In Arabidopsis thaliana (Mouse-ear cress), this protein is Amidophosphoribosyltransferase 2, chloroplastic (ASE2).